The primary structure comprises 523 residues: 2-isopropylmalate synthase (523 aa).

The Pyruvate carboxyltransferase domain maps to 5-267 (VVIFDTTLRD…QTRINHNEIW (263 aa)). Residues D14, H202, H204, and N238 each contribute to the Mn(2+) site. The interval 392-523 (RMDYFSVQSG…QNKENNKETV (132 aa)) is regulatory domain.

It belongs to the alpha-IPM synthase/homocitrate synthase family. LeuA type 1 subfamily. Homodimer. Mn(2+) is required as a cofactor.

It is found in the cytoplasm. It catalyses the reaction 3-methyl-2-oxobutanoate + acetyl-CoA + H2O = (2S)-2-isopropylmalate + CoA + H(+). Its pathway is amino-acid biosynthesis; L-leucine biosynthesis; L-leucine from 3-methyl-2-oxobutanoate: step 1/4. In terms of biological role, catalyzes the condensation of the acetyl group of acetyl-CoA with 3-methyl-2-oxobutanoate (2-ketoisovalerate) to form 3-carboxy-3-hydroxy-4-methylpentanoate (2-isopropylmalate). This chain is 2-isopropylmalate synthase, found in Enterobacter sp. (strain 638).